Reading from the N-terminus, the 536-residue chain is MVLKTIEDNCKSQFDDDLVEDFNNFQTTSSMSSSTTISTEDFNTIEIESTFEICRSGSYTEEPILGENDEFLIDFEMERFLKFLKDKTKQVEKRKEPFSQKEIYAVFQRRIKSELCIETVKKKFQPLLPNAIQTCEFDEETMIRMIYGAGIRIDSVDFWNRFTSKATISLDCYSRLISYSSDSLTLSGTHRSGFTYHWISTPPVTYHRTENKDPNIQEPSPVEFLDVQSSLGSSMKPPILDKPTKLDDPAETRHDCSYSLEEYDSQSRMPRTDAKKSNHKHKYCYEMNSNPRGTVLILSNENFKNMERRVGTKQDEVNLTKLFQKLQYTVICKRNLEAESMLEAIKEFAEMAHTDSIILFLLSHGDGAGSVFGIDDMPVNVMEVSTYLAYHQNLLLKPKWVAVSACRGGKLNMGVPVDGLPALEDKCAPISKFWNLMMSRIMPGTFTSLNADVIISFSTTDGFTSYRDEEAGTWYIKSMCKVFNKHSKTMHLLDILTETGRNVVTKYENVQGNVVLKQAPEILSRLTKQWHFSRSM.

A propeptide spans 1–273 (MVLKTIEDNC…DSQSRMPRTD (273 aa)) (removed in mature form by autoprocessing). Active-site residues include His-364 and Cys-406.

It belongs to the peptidase C14A family. As to quaternary structure, heterodimer formed by the tight association of the large subunit p16 and the small subunit p14. In terms of processing, autocatalytic cleavage removes the propeptide and generates the two active subunits p16 and p14 in vitro. Cannot be cleaved by ced-3 in vitro. Isoform a: Expression is restricted to the late germline pachytene stage of meiosis I in both L4 larvae and adult hermaphrodite gonads. Isoform b: Expression is restricted to the late germline pachytene stage of meiosis I in both L4 larvae and adult hermaphrodite gonads.

It catalyses the reaction Strict requirement for an Asp residue at position P1 and has a preferred cleavage sequence of Tyr-Val-Ala-Asp-|-.. Its activity is regulated as follows. Inhibited by cysteine protease inhibitor iodoacetic acid (CH3COOI) but not by N-[N-(L-3-transcarboxirane-2-carbonyl)-leucyl]-agmatine (E-64) or benzyloxycarbonyl-DEVD-fluoro-methyl ketone (Z-DEVD-FMK). Its function is as follows. Cysteine protease which, in vitro, cleaves itself and caspase ced-3 into their mature active forms. Also cleaves, in vitro, inactive caspase csp-2 isoform b. Required maternally to induce apoptosis in a subset of cells fated to die during embryogenesis, mostly independently of the ced-9, ced-4 and ced-3 canonical apoptosis pathway. Involved in the degeneration of dopaminergic CEP neurons in response to high Mn(2+) levels. Dispensable for regulating apoptosis during embryogenesis. The sequence is that of Caspase A from Caenorhabditis elegans.